A 529-amino-acid polypeptide reads, in one-letter code: MPRGPVAALLLLILHGAWSCLDLTCYTDYLWTITCVLETRSPNPSILSLTWQDEYEELQDQETFCSLHRSGHNTTHIWYTCHMRLSQFLSDEVFIVNVTDQSGNNSQECGSFVLAESIKPAPPLNVTVAFSGRYDISWDSAYDEPSNYVLRGKLQYELQYRNLRDPYAVRPVTKLISVDSRNVSLLPEEFHKDSSYQLQVRAAPQPGTSFRGTWSEWSDPVIFQTQAGEPEAGWDPHMLLLLAVLIIVLVFMGLKIHLPWRLWKKIWAPVPTPESFFQPLYREHSGNFKKWVNTPFTASSIELVPQSSTTTSALHLSLYPAKEKKFPGLPGLEEQLECDGMSEPGHWCIIPLAAGQAVSAYSEERDRPYGLVSIDTVTVGDAEGLCVWPCSCEDDGYPAMNLDAGRESGPNSEDLLLVTDPAFLSCGCVSGSGLRLGGSPGSLLDRLRLSFAKEGDWTADPTWRTGSPGGGSESEAGSPPGLDMDTFDSGFAGSDCGSPVETDEGPPRSYLRQWVVRTPPPVDSGAQSS.

Positions 1–19 (MPRGPVAALLLLILHGAWS) are cleaved as a signal peptide. 3 disulfide bridges follow: Cys-20/Cys-109, Cys-25/Cys-35, and Cys-65/Cys-81. Residues 20 to 237 (CLDLTCYTDY…GEPEAGWDPH (218 aa)) are Extracellular-facing. 2 Fibronectin type-III domains span residues 21–118 (LDLT…AESI) and 119–228 (KPAP…TQAG). Residues Asn-73, Asn-97, Asn-104, Asn-125, and Asn-182 are each glycosylated (N-linked (GlcNAc...) asparagine). Trp-214 carries C-linked (Man) tryptophan glycosylation. Residues 214–218 (WSEWS) carry the WSXWS motif motif. The helical transmembrane segment at 238-258 (MLLLLAVLIIVLVFMGLKIHL) threads the bilayer. The Cytoplasmic segment spans residues 259–529 (PWRLWKKIWA…PPVDSGAQSS (271 aa)). The short motif at 266-274 (IWAPVPTPE) is the Box 1 motif element. A disordered region spans residues 458–529 (TADPTWRTGS…PPVDSGAQSS (72 aa)).

The protein belongs to the type I cytokine receptor family. Type 4 subfamily. As to quaternary structure, heterodimer with the common gamma subunit. Associates with JAK1. In terms of processing, C-mannosylated at Trp-214 in the WSXWS motif, the sugar chain makes extensive hydrogen bonds with Asn-73 sugar, and bridges the two fibronectin domains transforming the V-shaped receptor into an A-frame. In terms of tissue distribution, selectively expressed in lymphoid tissues. Most highly expressed in thymus and spleen.

The protein localises to the membrane. Functionally, this is a receptor for interleukin-21. The polypeptide is Interleukin-21 receptor (Il21r) (Mus musculus (Mouse)).